The following is a 70-amino-acid chain: Probable non-specific lipid-transfer protein 2 (70 aa).

Disulfide bonds link C4/C38, C12/C26, C27/C62, and C36/C69.

Functionally, potential phospholipid transfer protein. This is Probable non-specific lipid-transfer protein 2 from Zea mays (Maize).